Reading from the N-terminus, the 557-residue chain is Potassium-transporting ATPase potassium-binding subunit (557 aa).

A run of 12 helical transmembrane segments spans residues Gly-5–Ser-25, Leu-63–Gly-83, Gly-132–Ile-152, Leu-170–Ile-190, Phe-253–Val-273, Leu-283–Val-303, Val-329–Ala-349, Ala-356–Val-376, Gly-379–Gly-399, Leu-416–Met-436, Leu-484–Ala-504, and Leu-526–Ala-546.

It belongs to the KdpA family. In terms of assembly, the system is composed of three essential subunits: KdpA, KdpB and KdpC.

Its subcellular location is the cell inner membrane. Functionally, part of the high-affinity ATP-driven potassium transport (or Kdp) system, which catalyzes the hydrolysis of ATP coupled with the electrogenic transport of potassium into the cytoplasm. This subunit binds the periplasmic potassium ions and delivers the ions to the membrane domain of KdpB through an intramembrane tunnel. The protein is Potassium-transporting ATPase potassium-binding subunit of Escherichia coli O6:K15:H31 (strain 536 / UPEC).